The following is a 131-amino-acid chain: MLSGGGGDADLANAAARGQVEAVRQLLEAGVDPNRLNRFGRRPIQVMMMGSARVAELLLLHGADPNCADPATLTRPVHDAAREGFLDTLVALHRAGGRLDVRDAWGRLPVDLAEERGHRDVARYLRATAGD.

ANK repeat units follow at residues 6 to 35 (GGDA…DPNR), 39 to 67 (FGRR…DPNC), 72 to 101 (TLTR…RLDV), and 105 to 131 (WGRL…TAGD).

Belongs to the CDKN2 cyclin-dependent kinase inhibitor family. Heterodimer of CDKN2B with CDK4 or CDK6.

Interacts strongly with CDK4 and CDK6. Potent inhibitor. Potential effector of TGF-beta induced cell cycle arrest. In Bos taurus (Bovine), this protein is Cyclin-dependent kinase 4 inhibitor B (CDKN2B).